Reading from the N-terminus, the 95-residue chain is Small ribosomal subunit protein bS6 (95 aa).

The protein belongs to the bacterial ribosomal protein bS6 family.

Functionally, binds together with bS18 to 16S ribosomal RNA. The sequence is that of Small ribosomal subunit protein bS6 from Oceanobacillus iheyensis (strain DSM 14371 / CIP 107618 / JCM 11309 / KCTC 3954 / HTE831).